Consider the following 93-residue polypeptide: uncharacterized protein (93 aa).

The stretch at 36–69 forms a coiled coil; that stretch reads SEERLLSRLFEEMDELREAVEKEDWENLRDELLD.

This is an uncharacterized protein from Archaeoglobus fulgidus (strain ATCC 49558 / DSM 4304 / JCM 9628 / NBRC 100126 / VC-16).